The primary structure comprises 312 residues: Pantothenate kinase (312 aa).

Residue 92 to 99 (GSVAVGKS) coordinates ATP.

Belongs to the prokaryotic pantothenate kinase family.

It localises to the cytoplasm. It carries out the reaction (R)-pantothenate + ATP = (R)-4'-phosphopantothenate + ADP + H(+). The protein operates within cofactor biosynthesis; coenzyme A biosynthesis; CoA from (R)-pantothenate: step 1/5. This is Pantothenate kinase (coaA) from Vibrio cholerae serotype O1 (strain ATCC 39315 / El Tor Inaba N16961).